The chain runs to 446 residues: D(1A) dopamine receptor (446 aa).

Topologically, residues methionine 1–arginine 23 are extracellular. Asparagine 5 carries N-linked (GlcNAc...) asparagine glycosylation. A helical transmembrane segment spans residues isoleucine 24–isoleucine 49. Residues arginine 50 to asparagine 60 lie on the Cytoplasmic side of the membrane. The helical transmembrane segment at phenylalanine 61–alanine 87 threads the bilayer. Over glycine 88–cysteine 96 the chain is Extracellular. Cysteine 96 and cysteine 186 form a disulfide bridge. A helical membrane pass occupies residues asparagine 97–valine 119. The Cytoplasmic segment spans residues aspartate 120–lysine 138. Residues alanine 139–tryptophan 163 form a helical membrane-spanning segment. The Extracellular segment spans residues histidine 164–arginine 192. The N-linked (GlcNAc...) asparagine glycan is linked to asparagine 175. The helical transmembrane segment at threonine 193–tyrosine 218 threads the bilayer. At arginine 219 to lysine 272 the chain is on the cytoplasmic side. The helical transmembrane segment at threonine 273–glycine 299 threads the bilayer. The Extracellular portion of the chain corresponds to serine 300 to threonine 312. The helical transmembrane segment at phenylalanine 313 to phenylalanine 337 threads the bilayer. Over arginine 338–threonine 446 the chain is Cytoplasmic. 2 S-palmitoyl cysteine lipidation sites follow: cysteine 347 and cysteine 351.

It belongs to the G-protein coupled receptor 1 family. In terms of assembly, interacts with DNAJC14 via its C-terminus. Interacts with DRD2. Interacts with DORIP1.

The protein localises to the cell membrane. Its subcellular location is the endoplasmic reticulum membrane. It is found in the cell projection. It localises to the cilium membrane. The protein resides in the dendrite. The protein localises to the dendritic spine. Dopamine receptor whose activity is mediated by G proteins which activate adenylyl cyclase. The chain is D(1A) dopamine receptor (DRD1) from Macaca mulatta (Rhesus macaque).